A 156-amino-acid polypeptide reads, in one-letter code: MSRKNQAPKREVLPDPLYNSKIVTRLINRVMLDGKRGTAATIVYDAFSAIKEATGNDALEVFETAMDNIMPVLEVRARRVGGSNYQVPVEVRPERRTTLGLRWLVNASRARGEHTMKDRLAKEIMDAANNTGASVKKREDTHKMAEANRAFAHFRW.

Belongs to the universal ribosomal protein uS7 family. In terms of assembly, part of the 30S ribosomal subunit. Contacts proteins S9 and S11.

One of the primary rRNA binding proteins, it binds directly to 16S rRNA where it nucleates assembly of the head domain of the 30S subunit. Is located at the subunit interface close to the decoding center, probably blocks exit of the E-site tRNA. The sequence is that of Small ribosomal subunit protein uS7 from Streptococcus pyogenes serotype M3 (strain ATCC BAA-595 / MGAS315).